Here is a 195-residue protein sequence, read N- to C-terminus: uncharacterized protein (195 aa).

One can recognise a Nudix hydrolase domain in the interval 34 to 165; that stretch reads SHHAAVLIPI…WLDIHRGGVN (132 aa). The Nudix box motif lies at 72–94; the sequence is GKADPQDSSLIETALREAEEEVA. Mg(2+) is bound by residues Glu-88 and Glu-92.

It belongs to the Nudix hydrolase family. PCD1 subfamily. Mn(2+) serves as cofactor. Mg(2+) is required as a cofactor.

Probably mediates the hydrolysis of some nucleoside diphosphate derivatives. This is an uncharacterized protein from Yersinia enterocolitica serotype O:8 / biotype 1B (strain NCTC 13174 / 8081).